We begin with the raw amino-acid sequence, 316 residues long: Pantothenate kinase (316 aa).

95-102 (GSVAVGKS) contributes to the ATP binding site.

Belongs to the prokaryotic pantothenate kinase family.

It localises to the cytoplasm. It carries out the reaction (R)-pantothenate + ATP = (R)-4'-phosphopantothenate + ADP + H(+). It functions in the pathway cofactor biosynthesis; coenzyme A biosynthesis; CoA from (R)-pantothenate: step 1/5. This Shewanella oneidensis (strain ATCC 700550 / JCM 31522 / CIP 106686 / LMG 19005 / NCIMB 14063 / MR-1) protein is Pantothenate kinase.